The sequence spans 68 residues: Small ribosomal subunit protein bS21 (68 aa).

It belongs to the bacterial ribosomal protein bS21 family.

The protein is Small ribosomal subunit protein bS21 of Paracoccus denitrificans (strain Pd 1222).